Consider the following 1492-residue polypeptide: Neogenin (1492 aa).

The first 36 residues, 1 to 36, serve as a signal peptide directing secretion; sequence MAAEREAGRLLCTSSSRRCCPPPPLLLLLPLLLLLG. Topologically, residues 37–1136 are extracellular; that stretch reads RPASGAAATK…PTSPLDSNML (1100 aa). Ig-like C2-type domains lie at 63-158, 163-249, 254-347, and 352-437; these read PFYF…AKLT, PRFT…AELK, PEEI…AELT, and PGFL…AQLI. N84 carries N-linked (GlcNAc...) asparagine glycosylation. Disulfide bonds link C85–C140, C184–C232, and C281–C331. N221 carries an N-linked (GlcNAc...) asparagine glycan. The N-linked (GlcNAc...) asparagine glycan is linked to N337. A disulfide bridge links C373 with C421. Fibronectin type-III domains follow at residues 472–566, 572–662, 667–762, 772–862, 887–986, and 988–1085; these read APRD…TQPE, PAPN…TLSD, APQN…TFES, VPSS…RPHT, PPVG…LVPT, and PPKD…TPKA. 2 N-linked (GlcNAc...) asparagine glycosylation sites follow: N501 and N520. N-linked (GlcNAc...) asparagine glycosylation is found at N670 and N746. The N-linked (GlcNAc...) asparagine glycan is linked to N940. A disordered region spans residues 1072–1128; the sequence is GPMSEAVQFRTPKADSSDKMPNDQALGSAGKGSRLPDLGSDYKPPMSGSNSPHGSPT. The span at 1083-1092 shows a compositional bias: basic and acidic residues; the sequence is PKADSSDKMP. Over residues 1118 to 1128 the composition is skewed to polar residues; the sequence is SGSNSPHGSPT. A helical membrane pass occupies residues 1137–1157; it reads LVIIVSVGVITIVVVVVIAVF. Topologically, residues 1158–1492 are cytoplasmic; that stretch reads CTRRTTSHQK…MKDLNAITTA (335 aa). Disordered stretches follow at residues 1205-1237, 1266-1300, and 1321-1396; these read PIDK…SMDS, PKMM…HSSS, and SMSL…FAVP. S1209 and S1225 each carry phosphoserine. Over residues 1222–1237 the composition is skewed to polar residues; sequence PRNSQDITPVDNSMDS. T1229 is modified (phosphothreonine). Polar residues-rich tracts occupy residues 1321–1353 and 1361–1380; these read SMSL…TCCT and ATSS…QSLP. Phosphoserine is present on S1432. T1435 bears the Phosphothreonine mark. A phosphoserine mark is found at S1463, S1465, and S1466.

It belongs to the immunoglobulin superfamily. DCC family. In terms of assembly, interacts with BMP2, BMP4, BMP6, and BMP7. Interacts with RGMA and RGMB. Interacts with MYO10. Widely expressed.

It is found in the cell membrane. Multi-functional cell surface receptor regulating cell adhesion in many diverse developmental processes, including neural tube and mammary gland formation, myogenesis and angiogenesis. Receptor for members of the BMP, netrin, and repulsive guidance molecule (RGM) families. Netrin-Neogenin interactions result in a chemoattractive axon guidance response and cell-cell adhesion, the interaction between NEO1/Neogenin and RGMa and RGMb induces a chemorepulsive response. This is Neogenin from Mus musculus (Mouse).